The chain runs to 38 residues: ACIDRFPTGTCKHVKKGGSCKNSQKYRINCAKTCGLCH.

One can recognise a ShKT domain in the interval 2–37 (CIDRFPTGTCKHVKKGGSCKNSQKYRINCAKTCGLC). 3 disulfide bridges follow: cysteine 2–cysteine 37, cysteine 11–cysteine 30, and cysteine 20–cysteine 34. The segment at 25–26 (KY) is crucial for binding to potassium channels.

Belongs to the sea anemone type 1 potassium channel toxin family. Type 1b subfamily.

The protein localises to the secreted. It localises to the nematocyst. Functionally, inhibits voltage-gated potassium channels (IC(50)=405.0 nM for rKCNA1/Kv1.1, IC(50)=0.03 nM for rKCNA2/Kv1.2, IC(50)=1.31 nM for rKCNA6/Kv1.6, IC(50)=74.11 nM for hKCNA3/Kv1.3, and IC(50)=247.69 nM for insect Shaker IR). Binds the Shaker IR channels in a voltage-independent manner. This chain is Kappa-actitoxin-Bcs3a, found in Bunodosoma caissarum (Sea anemone).